The primary structure comprises 437 residues: Phosphomethylpyrimidine synthase (437 aa).

Residues Asn-69, Met-98, Tyr-127, His-163, 185 to 187 (SRG), 226 to 229 (DACR), and Glu-265 each bind substrate. Zn(2+) is bound at residue His-269. A substrate-binding site is contributed by Tyr-292. His-333 provides a ligand contact to Zn(2+). [4Fe-4S] cluster contacts are provided by Cys-409, Cys-412, and Cys-416.

Belongs to the ThiC family. [4Fe-4S] cluster is required as a cofactor.

The catalysed reaction is 5-amino-1-(5-phospho-beta-D-ribosyl)imidazole + S-adenosyl-L-methionine = 4-amino-2-methyl-5-(phosphooxymethyl)pyrimidine + CO + 5'-deoxyadenosine + formate + L-methionine + 3 H(+). Its pathway is cofactor biosynthesis; thiamine diphosphate biosynthesis. Its function is as follows. Catalyzes the synthesis of the hydroxymethylpyrimidine phosphate (HMP-P) moiety of thiamine from aminoimidazole ribotide (AIR) in a radical S-adenosyl-L-methionine (SAM)-dependent reaction. This Clostridium botulinum (strain 657 / Type Ba4) protein is Phosphomethylpyrimidine synthase.